A 324-amino-acid polypeptide reads, in one-letter code: Endochitinase A2 (324 aa).

An N-terminal signal peptide occupies residues 1 to 20; it reads MSKLRIPILLVLFIVSCCSA. The 41-residue stretch at 21–61 folds into the Chitin-binding type-1 domain; that stretch reads EQCGTQAGGALCPGGLCCSKFGWCGSTSEYCGDGCQSQCSG. 4 cysteine pairs are disulfide-bonded: C23–C38, C32–C44, C37–C51, and C55–C59. The Proton donor role is filled by E133. Disulfide bonds link C151–C170 and C269–C301. Positions 310–324 are cleaved as a propeptide — removed in mature form; the sequence is SLPLSSILLDTVAAA.

The protein belongs to the glycosyl hydrolase 19 family. Chitinase class I subfamily.

It catalyses the reaction Random endo-hydrolysis of N-acetyl-beta-D-glucosaminide (1-&gt;4)-beta-linkages in chitin and chitodextrins.. In terms of biological role, defense against chitin-containing fungal pathogens. The chain is Endochitinase A2 (CHI2) from Pisum sativum (Garden pea).